A 201-amino-acid chain; its full sequence is Ribosome maturation factor RimM (201 aa).

The region spanning 92–166 (DEDEFYHADL…RVVVEPPANF (75 aa)) is the PRC barrel domain. The interval 169 to 201 (PAGPQPAEGEEMPDGALEALEGEEAGAGTAPQP) is disordered.

It belongs to the RimM family. In terms of assembly, binds ribosomal protein uS19.

The protein resides in the cytoplasm. An accessory protein needed during the final step in the assembly of 30S ribosomal subunit, possibly for assembly of the head region. Essential for efficient processing of 16S rRNA. May be needed both before and after RbfA during the maturation of 16S rRNA. It has affinity for free ribosomal 30S subunits but not for 70S ribosomes. The polypeptide is Ribosome maturation factor RimM (Rhodospirillum centenum (strain ATCC 51521 / SW)).